The primary structure comprises 353 residues: Phospho-N-acetylmuramoyl-pentapeptide-transferase (353 aa).

Helical transmembrane passes span 24 to 44 (LGFF…ILWA), 66 to 86 (TPTM…VLCA), 88 to 108 (LGNL…FVGF), 129 to 149 (FGML…KGLD), 160 to 180 (PLFE…FLST), 192 to 212 (GLAS…VYVA), 229 to 249 (VGEL…FLWY), 256 to 276 (VFMG…NAIV), 281 to 301 (ILLV…ILQV), and 330 to 350 (KVIV…LLSL).

The protein belongs to the glycosyltransferase 4 family. MraY subfamily. Mg(2+) is required as a cofactor.

It is found in the cell inner membrane. The catalysed reaction is UDP-N-acetyl-alpha-D-muramoyl-L-alanyl-gamma-D-glutamyl-meso-2,6-diaminopimeloyl-D-alanyl-D-alanine + di-trans,octa-cis-undecaprenyl phosphate = di-trans,octa-cis-undecaprenyl diphospho-N-acetyl-alpha-D-muramoyl-L-alanyl-D-glutamyl-meso-2,6-diaminopimeloyl-D-alanyl-D-alanine + UMP. The protein operates within cell wall biogenesis; peptidoglycan biosynthesis. Its function is as follows. Catalyzes the initial step of the lipid cycle reactions in the biosynthesis of the cell wall peptidoglycan: transfers peptidoglycan precursor phospho-MurNAc-pentapeptide from UDP-MurNAc-pentapeptide onto the lipid carrier undecaprenyl phosphate, yielding undecaprenyl-pyrophosphoryl-MurNAc-pentapeptide, known as lipid I. In Helicobacter pylori (strain Shi470), this protein is Phospho-N-acetylmuramoyl-pentapeptide-transferase.